We begin with the raw amino-acid sequence, 270 residues long: Transcription factor PU.1 (270 aa).

The segment at 123–164 (SLSPAQPSSDEEEGERQSPPLEVSDGEADGLEPGPGLLPGET) is disordered. Phosphoserine is present on residues Ser-140 and Ser-146. The span at 153–164 (LEPGPGLLPGET) shows a compositional bias: low complexity. Positions 170-253 (IRLYQFLLDL…VKKKLTYQFS (84 aa)) form a DNA-binding region, ETS. The DNA site is built by Lys-217, Arg-230, Arg-233, and Lys-243.

Belongs to the ETS family. As to quaternary structure, binds DNA as a monomer. Can form homomers. Directly interacts with CEBPD/NF-IL6-beta; this interaction does not affect DNA-binding properties of each partner. Interacts with NONO/p54(nrb). Interacts with RUNX1/AML1. Interacts with GFI1; the interaction represses SPI1 transcriptional activity, hence blocks SPI1-induced macrophage differentiation of myeloid progenitor cells. Interacts with CEBPE. Interacts with IRF4/Pip and IRF8. Interacts with JUN. Interacts with RB1. Interacts with TBP. In terms of tissue distribution, in the bone marrow, concentrated in hematopoietic stem cell, lymphoid progenitor, myeloid lineage (granulocyte macrophage progenitors, classical dendritic cells, monocytes) and B-cell clusters. Among B-cells, predominantly expressed in pre-B1 cells. Expressed in germinal center B-cells.

The protein localises to the nucleus. With respect to regulation, transcriptional activity at macrophage-specific genes is inhibited by interaction with GFI1, which results in the inhibition of SPI1-induced macrophage differentiation of myeloid progenitor cells, but not that of the granulocyte lineage. In terms of biological role, pioneer transcription factor, which controls hematopoietic cell fate by decompacting stem cell heterochromatin and allowing other transcription factors to enter otherwise inaccessible genomic sites. Once in open chromatin, can directly control gene expression by binding genetic regulatory elements and can also more broadly influence transcription by recruiting transcription factors, such as interferon regulatory factors (IRFs), to otherwise inaccessible genomic regions. Transcriptionally activates genes important for myeloid and lymphoid lineages, such as CSF1R. Transcriptional activation from certain promoters, possibly containing low affinity binding sites, is achieved cooperatively with other transcription factors. FCER1A transactivation is achieved in cooperation with GATA1. May be particularly important for the pro- to pre-B cell transition. Binds (via the ETS domain) onto the purine-rich DNA core sequence 5'-GAGGAA-3', also known as the PU-box. In vitro can bind RNA and interfere with pre-mRNA splicing. The polypeptide is Transcription factor PU.1 (SPI1) (Homo sapiens (Human)).